A 309-amino-acid chain; its full sequence is Small ribosomal subunit biogenesis GTPase RsgA (309 aa).

In terms of domain architecture, CP-type G spans 64–225 (ENELVRPPLA…VADTPGFSTY (162 aa)). GTP is bound by residues 113–116 (SKTD) and 168–176 (GQTGAGKST). Residues cysteine 249, cysteine 254, histidine 256, and cysteine 262 each coordinate Zn(2+).

It belongs to the TRAFAC class YlqF/YawG GTPase family. RsgA subfamily. As to quaternary structure, monomer. Associates with 30S ribosomal subunit, binds 16S rRNA. Zn(2+) serves as cofactor.

The protein resides in the cytoplasm. Functionally, one of several proteins that assist in the late maturation steps of the functional core of the 30S ribosomal subunit. Helps release RbfA from mature subunits. May play a role in the assembly of ribosomal proteins into the subunit. Circularly permuted GTPase that catalyzes slow GTP hydrolysis, GTPase activity is stimulated by the 30S ribosomal subunit. In Pediococcus pentosaceus (strain ATCC 25745 / CCUG 21536 / LMG 10740 / 183-1w), this protein is Small ribosomal subunit biogenesis GTPase RsgA.